A 172-amino-acid polypeptide reads, in one-letter code: SsrA-binding protein (172 aa).

This sequence belongs to the SmpB family.

Its subcellular location is the cytoplasm. Its function is as follows. Required for rescue of stalled ribosomes mediated by trans-translation. Binds to transfer-messenger RNA (tmRNA), required for stable association of tmRNA with ribosomes. tmRNA and SmpB together mimic tRNA shape, replacing the anticodon stem-loop with SmpB. tmRNA is encoded by the ssrA gene; the 2 termini fold to resemble tRNA(Ala) and it encodes a 'tag peptide', a short internal open reading frame. During trans-translation Ala-aminoacylated tmRNA acts like a tRNA, entering the A-site of stalled ribosomes, displacing the stalled mRNA. The ribosome then switches to translate the ORF on the tmRNA; the nascent peptide is terminated with the 'tag peptide' encoded by the tmRNA and targeted for degradation. The ribosome is freed to recommence translation, which seems to be the essential function of trans-translation. The polypeptide is SsrA-binding protein (Dehalococcoides mccartyi (strain ATCC BAA-2266 / KCTC 15142 / 195) (Dehalococcoides ethenogenes (strain 195))).